The primary structure comprises 1045 residues: Bifunctional glutamine synthetase adenylyltransferase/adenylyl-removing enzyme (1045 aa).

The tract at residues 1–527 is adenylyl removase; it reads MSGPLRSERK…LHSQLFYRPL (527 aa). The adenylyl transferase stretch occupies residues 533 to 1045; sequence NLSADAIRLS…GVDSMEQREF (513 aa).

Belongs to the GlnE family. Mg(2+) is required as a cofactor.

The enzyme catalyses [glutamine synthetase]-O(4)-(5'-adenylyl)-L-tyrosine + phosphate = [glutamine synthetase]-L-tyrosine + ADP. It catalyses the reaction [glutamine synthetase]-L-tyrosine + ATP = [glutamine synthetase]-O(4)-(5'-adenylyl)-L-tyrosine + diphosphate. Functionally, involved in the regulation of glutamine synthetase GlnA, a key enzyme in the process to assimilate ammonia. When cellular nitrogen levels are high, the C-terminal adenylyl transferase (AT) inactivates GlnA by covalent transfer of an adenylyl group from ATP to specific tyrosine residue of GlnA, thus reducing its activity. Conversely, when nitrogen levels are low, the N-terminal adenylyl removase (AR) activates GlnA by removing the adenylyl group by phosphorolysis, increasing its activity. The regulatory region of GlnE binds the signal transduction protein PII (GlnB) which indicates the nitrogen status of the cell. This is Bifunctional glutamine synthetase adenylyltransferase/adenylyl-removing enzyme from Corynebacterium glutamicum (strain ATCC 13032 / DSM 20300 / JCM 1318 / BCRC 11384 / CCUG 27702 / LMG 3730 / NBRC 12168 / NCIMB 10025 / NRRL B-2784 / 534).